A 528-amino-acid polypeptide reads, in one-letter code: MTTFRELGLSDSLLQSVESMGFEEATPIQAETIPHALQGKDIIGQAQTGTGKTAAFGLPLLDKVDTHKESVQGIVIAPTRELAIQVGEELYKIGKHKRVRILPIYGGQDINRQIRALKKHPHIIVGTPGRILDHINRKTLRLQNVETVVLDEADEMLNMGFIEDIEAILTDVPETHQTLLFSATMPDPIRRIAERFMTEPQHIKVKAKEVTMPNIQQFYLEVQEKKKFDVLTRLLDIQSPELAIVFGRTKRRVDELSEALNLRGYAAEGIHGDLTQAKRMSVLRKFKEGSIEVLVATDVAARGLDISGVTHVYNFDIPQDPESYVHRIGRTGRAGKKGIAMLFVTPRESGQLKNIERTTKRKMDRMDAPTLDEALEGQQRLIAEKLQSTIENENLAYYKRIAEEMLEENDSVTVVAAALKMMTKEPDTTPIALTSEPPVVSRGGGSKKRGGNGGGYRDGNRNRSRDGRGGDGRNRDRNRDGRNRDGNRDRNREGSRDGNRGRRGEGQGRPGSSNGRGERKHHSRKPQA.

The Q motif motif lies at 2–30 (TTFRELGLSDSLLQSVESMGFEEATPIQA). The 171-residue stretch at 33–203 (IPHALQGKDI…ERFMTEPQHI (171 aa)) folds into the Helicase ATP-binding domain. 46–53 (AQTGTGKT) provides a ligand contact to ATP. Positions 151-154 (DEAD) match the DEAD box motif. The Helicase C-terminal domain maps to 214–374 (NIQQFYLEVQ…RMDAPTLDEA (161 aa)). The interval 428 to 528 (TTPIALTSEP…RKHHSRKPQA (101 aa)) is disordered. The span at 458-506 (DGNRNRSRDGRGGDGRNRDRNRDGRNRDGNRDRNREGSRDGNRGRRGEG) shows a compositional bias: basic and acidic residues. Positions 518–528 (ERKHHSRKPQA) are enriched in basic residues.

This sequence belongs to the DEAD box helicase family. CshA subfamily. As to quaternary structure, oligomerizes, may be a member of the RNA degradosome.

It is found in the cytoplasm. The catalysed reaction is ATP + H2O = ADP + phosphate + H(+). DEAD-box RNA helicase possibly involved in RNA degradation. Unwinds dsRNA in both 5'- and 3'-directions, has RNA-dependent ATPase activity. This chain is DEAD-box ATP-dependent RNA helicase CshA, found in Bacillus thuringiensis (strain Al Hakam).